The chain runs to 1450 residues: Sister chromatid cohesion protein PDS5 homolog (1450 aa).

Disordered regions lie at residues 1–145 (MATR…KETK), 680–707 (VGGS…QQQQ), and 1340–1450 (LPPL…EVEN). Positions 45–59 (DDGELDSDIDEEDES) are enriched in acidic residues. The segment covering 77-138 (KTQQQPQKSI…TSSSSQQSTQ (62 aa)) has biased composition (low complexity). Positions 650 to 716 (KQLFKKYLEE…QLQQPENDIE (67 aa)) form a coiled coil. A compositionally biased stretch (polar residues) spans 682 to 691 (GSTTPTSKKS). Composition is skewed to low complexity over residues 692 to 707 (QPPQ…QQQQ) and 1350 to 1363 (NNNN…STNN). The segment covering 1369 to 1378 (DENNNNKNDN) has biased composition (basic and acidic residues). Positions 1387–1401 (NSTTAVPQKSIISKP) are enriched in low complexity. The span at 1402-1427 (PAKKVSKKAAAKQKSPKKKTNKKKKQ) shows a compositional bias: basic residues. Acidic residues predominate over residues 1430–1450 (SEEEVSSSEEEDESQDEEVEN).

This sequence belongs to the PDS5 family.

It localises to the nucleus. May regulate sister chromatid cohesion during mitosis and couple it to DNA replication. This Dictyostelium discoideum (Social amoeba) protein is Sister chromatid cohesion protein PDS5 homolog.